Consider the following 132-residue polypeptide: Small ribosomal subunit protein uS8 (132 aa).

Belongs to the universal ribosomal protein uS8 family. As to quaternary structure, part of the 30S ribosomal subunit. Contacts proteins S5 and S12.

In terms of biological role, one of the primary rRNA binding proteins, it binds directly to 16S rRNA central domain where it helps coordinate assembly of the platform of the 30S subunit. This Anaplasma marginale (strain Florida) protein is Small ribosomal subunit protein uS8.